Here is a 196-residue protein sequence, read N- to C-terminus: uncharacterized protein (196 aa).

A helical transmembrane segment spans residues 71–87 (YVKLIGTGCYVAILISG).

It is found in the membrane. This is an uncharacterized protein from Dictyostelium discoideum (Social amoeba).